Here is a 373-residue protein sequence, read N- to C-terminus: MNGERLLACIKQCIMQHFQPMVYDESRCVIETTRGTFPVPDNYKKYKTLAFAFVGHVLNTDDTPVIEKELDWPDPALVYNTIVDRIINHPELSQFISVAFISQLKATIGEGLDINVKGTLNRRGKGIRRPKGVFFRYMESPFVNTKVTAFFSYLRDYNKIASEYHNNTKFILTFSCQAYWASGPNFSALKNVIRCSIIHEYISKFVEREQDKGHIGDQELPPEEDPSRELNNVQHEVNSLTEQDAEADEGLWGEIDSLCEKWQSEAEDQTEAEIIADRIIGNSQRMANLKIRRTKFKSVLYHILKELIQSQGTVKVYRGSSFSHDSIKISLHYEEQHITAVWVYLTVKFEEHWKPVDVEVEFRCKFKERKVDG.

The interval 1 to 76 is interaction with REP2; it reads MNGERLLACI…EKELDWPDPA (76 aa). The tract at residues 1–129 is interaction with REP2 and self-association; it reads MNGERLLACI…LNRRGKGIRR (129 aa). The nuclear localization stretch occupies residues 349–373; it reads FEEHWKPVDVEVEFRCKFKERKVDG.

In terms of assembly, interacts with REP2.

It localises to the nucleus. Functionally, part of the plasmid partitioning system, which ensures the equal distribution of replicated plasmid molecules to daughter cells. The plasmids exist as well-organized plasmid foci within the nucleus that stay together throughout the cell-cycle and act as entity during segregation, effetively reducing copy number to one. Plasmid partitioning requires the proteins REP1, REP2, and a cis-acting locus STB (REP3). REP1-REP2 stably associate with CSE4-containing chromatin at STB during S-phase, marking the locus with a centromeric tag, and thereby probably catching mitotic spindle microtubules to the plasmid cluster and coupling plasmid segregation to chromosome segregation. REP1-REP2 are required to recruit the cohesin complex to the STB locus for pairing of the replicated plasmid cluster, a prerequisite for successful plasmid segregation. REP1-REP2 also negatively regulate expression of site-specific recombinase FLP and of RAF1. The polypeptide is Partitioning protein REP1 (REP1) (Saccharomyces cerevisiae (strain ATCC 204508 / S288c) (Baker's yeast)).